The following is a 607-amino-acid chain: UvrABC system protein C (607 aa).

One can recognise a GIY-YIG domain in the interval 11–89; that stretch reads CKPGVYRFED…IKEFAPPCNV (79 aa). The region spanning 201–236 is the UVR domain; the sequence is SSLLESLKKKMLKASKNKEYEEAAILRDKIQAAQTV.

Belongs to the UvrC family. As to quaternary structure, interacts with UvrB in an incision complex.

It is found in the cytoplasm. Functionally, the UvrABC repair system catalyzes the recognition and processing of DNA lesions. UvrC both incises the 5' and 3' sides of the lesion. The N-terminal half is responsible for the 3' incision and the C-terminal half is responsible for the 5' incision. This is UvrABC system protein C from Tropheryma whipplei (strain TW08/27) (Whipple's bacillus).